Here is a 130-residue protein sequence, read N- to C-terminus: MSMQDPIADMLTRIRNGQSANKVAVTMPSSKLKLAIANVLKEEGYIEEFKIEGDTKPELELTLKYFQGKAVVESIQRVSRPGLRIYKRKDELPKVMAGLGIAVVSTSKGVMTDRAARQAGLGGEIICYVA.

Belongs to the universal ribosomal protein uS8 family. Part of the 30S ribosomal subunit. Contacts proteins S5 and S12.

Functionally, one of the primary rRNA binding proteins, it binds directly to 16S rRNA central domain where it helps coordinate assembly of the platform of the 30S subunit. The sequence is that of Small ribosomal subunit protein uS8 from Erwinia tasmaniensis (strain DSM 17950 / CFBP 7177 / CIP 109463 / NCPPB 4357 / Et1/99).